We begin with the raw amino-acid sequence, 374 residues long: Isocitrate dehydrogenase [NAD] catalytic subunit 5, mitochondrial (374 aa).

The transit peptide at 1–44 (MTMAANLARRLIGNRSTQILGAVNSSSGAASSVARAFCSSTTPI) directs the protein to the mitochondrion. Substrate contacts are provided by arginine 127, arginine 137, arginine 158, and aspartate 245. 3 residues coordinate Mg(2+): aspartate 245, aspartate 269, and aspartate 273.

The protein belongs to the isocitrate and isopropylmalate dehydrogenases family. Heterooligomer of catalytic and regulatory subunits. Requires Mg(2+) as cofactor. The cofactor is Mn(2+). Ubiquitous.

Its subcellular location is the mitochondrion. The catalysed reaction is D-threo-isocitrate + NAD(+) = 2-oxoglutarate + CO2 + NADH. In terms of biological role, performs an essential role in the oxidative function of the citric acid cycle. In Arabidopsis thaliana (Mouse-ear cress), this protein is Isocitrate dehydrogenase [NAD] catalytic subunit 5, mitochondrial (IDH5).